Here is a 186-residue protein sequence, read N- to C-terminus: Ribosome-recycling factor (186 aa).

Belongs to the RRF family.

It is found in the cytoplasm. Responsible for the release of ribosomes from messenger RNA at the termination of protein biosynthesis. May increase the efficiency of translation by recycling ribosomes from one round of translation to another. This Leifsonia xyli subsp. xyli (strain CTCB07) protein is Ribosome-recycling factor.